Consider the following 640-residue polypeptide: Threonine--tRNA ligase (640 aa).

In terms of domain architecture, TGS spans Met-1 to Thr-61. Positions Asp-242 to Pro-533 are catalytic. Positions 334, 385, and 510 each coordinate Zn(2+).

This sequence belongs to the class-II aminoacyl-tRNA synthetase family. Homodimer. The cofactor is Zn(2+).

Its subcellular location is the cytoplasm. The catalysed reaction is tRNA(Thr) + L-threonine + ATP = L-threonyl-tRNA(Thr) + AMP + diphosphate + H(+). Catalyzes the attachment of threonine to tRNA(Thr) in a two-step reaction: L-threonine is first activated by ATP to form Thr-AMP and then transferred to the acceptor end of tRNA(Thr). Also edits incorrectly charged L-seryl-tRNA(Thr). The protein is Threonine--tRNA ligase of Petrotoga mobilis (strain DSM 10674 / SJ95).